Here is a 337-residue protein sequence, read N- to C-terminus: MTNVFKGRHFLAEKDFTRAELEWLIDFSAHLKDLKKRNIPHRYLEGKNIALLFEKTSTRTRAAFTVASIDLGAHPEYLGANDIQLGKKESTEDTAKVLGRMFDGIEFRGFSQKMVEELAEFSGVPVWNGLTDAWHPTQMLADYLTVKENFGKLEGLTLVYCGDGRNNVANSLLVTGAILGVNVHIFSPKELFPEEEVVALAEGFAKESGARVLITDNADEAVKGADVLYTDVWVSMGEEDKFAERVALLKPYQVNMELVKKAENENLIFLHCLPAFHDTNTVYGKDVAEKFGVEEMEVTDEVFRSKYARHFDQAENRMHTIKAVMAATLGDPFVPRV.

Carbamoyl phosphate-binding positions include Ser57–Thr60, Gln84, Arg108, and His135–Gln138. L-ornithine contacts are provided by residues Asn167, Asp231, and Ser235 to Met236. Residues Cys272–Leu273 and Arg317 each bind carbamoyl phosphate.

The protein belongs to the aspartate/ornithine carbamoyltransferase superfamily. OTCase family.

It localises to the cytoplasm. The enzyme catalyses carbamoyl phosphate + L-ornithine = L-citrulline + phosphate + H(+). Its pathway is amino-acid degradation; L-arginine degradation via ADI pathway; carbamoyl phosphate from L-arginine: step 2/2. Functionally, reversibly catalyzes the transfer of the carbamoyl group from carbamoyl phosphate (CP) to the N(epsilon) atom of ornithine (ORN) to produce L-citrulline. This chain is Ornithine carbamoyltransferase, catabolic, found in Streptococcus suis (strain 89/1591).